Here is a 313-residue protein sequence, read N- to C-terminus: Aspartoacylase (313 aa).

The Zn(2+) site is built by histidine 20 and glutamate 23. Substrate contacts are provided by residues arginine 62 and 69–70 (NR). Histidine 115 is a Zn(2+) binding site. Substrate-binding positions include 163–167 (YATTR), glutamate 177, and tyrosine 287. Glutamate 177 is a catalytic residue.

Belongs to the AspA/AstE family. Aspartoacylase subfamily. Zn(2+) is required as a cofactor.

Its subcellular location is the cytoplasm. It localises to the nucleus. It carries out the reaction an N-acyl-L-aspartate + H2O = a carboxylate + L-aspartate. Catalyzes the deacetylation of N-acetylaspartic acid (NAA) to produce acetate and L-aspartate. This chain is Aspartoacylase (aspa), found in Xenopus tropicalis (Western clawed frog).